A 363-amino-acid polypeptide reads, in one-letter code: Phosphoserine aminotransferase (363 aa).

Arg42 contributes to the L-glutamate binding site. Residues 76–77 (GR), Trp102, Thr156, Asp175, and Gln198 contribute to the pyridoxal 5'-phosphate site. Lys199 bears the N6-(pyridoxal phosphate)lysine mark. 240–241 (NT) serves as a coordination point for pyridoxal 5'-phosphate.

Belongs to the class-V pyridoxal-phosphate-dependent aminotransferase family. SerC subfamily. Homodimer. Pyridoxal 5'-phosphate serves as cofactor.

The protein localises to the cytoplasm. It carries out the reaction O-phospho-L-serine + 2-oxoglutarate = 3-phosphooxypyruvate + L-glutamate. The catalysed reaction is 4-(phosphooxy)-L-threonine + 2-oxoglutarate = (R)-3-hydroxy-2-oxo-4-phosphooxybutanoate + L-glutamate. It participates in amino-acid biosynthesis; L-serine biosynthesis; L-serine from 3-phospho-D-glycerate: step 2/3. Its pathway is cofactor biosynthesis; pyridoxine 5'-phosphate biosynthesis; pyridoxine 5'-phosphate from D-erythrose 4-phosphate: step 3/5. Functionally, catalyzes the reversible conversion of 3-phosphohydroxypyruvate to phosphoserine and of 3-hydroxy-2-oxo-4-phosphonooxybutanoate to phosphohydroxythreonine. This Shewanella baltica (strain OS195) protein is Phosphoserine aminotransferase.